Reading from the N-terminus, the 301-residue chain is Acetylglutamate kinase (301 aa).

Residues 68–69 (GG), arginine 90, and asparagine 195 contribute to the substrate site.

The protein belongs to the acetylglutamate kinase family. ArgB subfamily.

The protein localises to the cytoplasm. It catalyses the reaction N-acetyl-L-glutamate + ATP = N-acetyl-L-glutamyl 5-phosphate + ADP. It functions in the pathway amino-acid biosynthesis; L-arginine biosynthesis; N(2)-acetyl-L-ornithine from L-glutamate: step 2/4. Catalyzes the ATP-dependent phosphorylation of N-acetyl-L-glutamate. This Pseudomonas aeruginosa (strain LESB58) protein is Acetylglutamate kinase.